The sequence spans 63 residues: Frenatin 1.1 (63 aa).

An N-terminal signal peptide occupies residues 1-22 (MAFLKKSLFLVLFLGLVSLSIC). A propeptide spanning residues 23–49 (EKEKKEQEDEDENEEEKESEEGSEEKR) is cleaved from the precursor. The disordered stretch occupies residues 25 to 63 (EKKEQEDEDENEEEKESEEGSEEKRGLLDTLGGILGLGR). Residues 30 to 45 (EDEDENEEEKESEEGS) show a composition bias toward acidic residues. L61 carries the post-translational modification Leucine amide.

Expressed by the skin glands.

It localises to the secreted. Its function is as follows. Antimicrobial peptide with selective activity. Is only active against Micrococcus luteus (MIC=25 ug/ml) and not against Bacillus cereus, Escherichia coli, Leuconostoc mesenteroides, Micrococcus luteus, Pastewella haemolytica, Staphylococcus aureus, Streptococcus faecalis and Streptococcus uberis. This Nyctimystes infrafrenatus (White-lipped tree frog) protein is Frenatin 1.1.